The following is a 239-amino-acid chain: Large ribosomal subunit protein uL1 (239 aa).

This sequence belongs to the universal ribosomal protein uL1 family. In terms of assembly, part of the 50S ribosomal subunit.

Its function is as follows. Binds directly to 23S rRNA. The L1 stalk is quite mobile in the ribosome, and is involved in E site tRNA release. Protein L1 is also a translational repressor protein, it controls the translation of the L11 operon by binding to its mRNA. This is Large ribosomal subunit protein uL1 from Rhodococcus erythropolis (strain PR4 / NBRC 100887).